The primary structure comprises 168 residues: Transcription antitermination protein NusB (168 aa).

The protein belongs to the NusB family.

Involved in transcription antitermination. Required for transcription of ribosomal RNA (rRNA) genes. Binds specifically to the boxA antiterminator sequence of the ribosomal RNA (rrn) operons. This is Transcription antitermination protein NusB from Brucella anthropi (strain ATCC 49188 / DSM 6882 / CCUG 24695 / JCM 21032 / LMG 3331 / NBRC 15819 / NCTC 12168 / Alc 37) (Ochrobactrum anthropi).